A 118-amino-acid polypeptide reads, in one-letter code: Large ribosomal subunit protein bL12 (118 aa).

N-acetylmethionine; in form MA2 is present on Met1.

Belongs to the bacterial ribosomal protein bL12 family. Homodimer. Part of the ribosomal stalk of the 50S ribosomal subunit. Forms a multimeric L10(L12)X complex, where L10 forms an elongated spine to which 2 to 4 L12 dimers bind in a sequential fashion. Binds GTP-bound translation factors. In terms of processing, acetylation of Met-1 converts MA1 to MA2.

Its function is as follows. Forms part of the ribosomal stalk which helps the ribosome interact with GTP-bound translation factors. Is thus essential for accurate translation. The polypeptide is Large ribosomal subunit protein bL12 (Micrococcus luteus (Micrococcus lysodeikticus)).